Consider the following 619-residue polypeptide: Elongation factor 4 (619 aa).

Residues 17-198 (SVIRNFCIIA…RVVRAIPGPE (182 aa)) enclose the tr-type G domain. Residues 29 to 34 (DHGKST) and 145 to 148 (NKID) contribute to the GTP site.

It belongs to the TRAFAC class translation factor GTPase superfamily. Classic translation factor GTPase family. LepA subfamily.

The protein localises to the cell membrane. The catalysed reaction is GTP + H2O = GDP + phosphate + H(+). Required for accurate and efficient protein synthesis under certain stress conditions. May act as a fidelity factor of the translation reaction, by catalyzing a one-codon backward translocation of tRNAs on improperly translocated ribosomes. Back-translocation proceeds from a post-translocation (POST) complex to a pre-translocation (PRE) complex, thus giving elongation factor G a second chance to translocate the tRNAs correctly. Binds to ribosomes in a GTP-dependent manner. The protein is Elongation factor 4 of Micrococcus luteus (strain ATCC 4698 / DSM 20030 / JCM 1464 / CCM 169 / CCUG 5858 / IAM 1056 / NBRC 3333 / NCIMB 9278 / NCTC 2665 / VKM Ac-2230) (Micrococcus lysodeikticus).